We begin with the raw amino-acid sequence, 300 residues long: Probable alpha-L-glutamate ligase (300 aa).

The 184-residue stretch at 104-287 folds into the ATP-grasp domain; it reads LQLLARQGID…IAGRMIQWIE (184 aa). ATP is bound by residues Lys-141, 178–179, Asp-187, and 211–213; these read EY and RSN. Residues Asp-248, Glu-260, and Asn-262 each contribute to the Mg(2+) site. Asp-248, Glu-260, and Asn-262 together coordinate Mn(2+).

Belongs to the RimK family. The cofactor is Mg(2+). Requires Mn(2+) as cofactor.

In Citrobacter koseri (strain ATCC BAA-895 / CDC 4225-83 / SGSC4696), this protein is Probable alpha-L-glutamate ligase.